Consider the following 502-residue polypeptide: Cytochrome P450 71B19 (502 aa).

Residues 1-21 (MAISFLCVFLITFVSLIFFAK) traverse the membrane as a helical segment. Residue Cys-444 participates in heme binding.

Belongs to the cytochrome P450 family. Heme serves as cofactor.

The protein resides in the membrane. The protein is Cytochrome P450 71B19 (CYP71B19) of Arabidopsis thaliana (Mouse-ear cress).